The chain runs to 161 residues: Ribonuclease P protein component (161 aa).

A disordered region spans residues 1 to 20; it reads MPDELRAEKSFPSKPYDSLK.

Belongs to the RnpA family. As to quaternary structure, consists of a catalytic RNA component (M1 or rnpB) and a protein subunit.

The catalysed reaction is Endonucleolytic cleavage of RNA, removing 5'-extranucleotides from tRNA precursor.. RNaseP catalyzes the removal of the 5'-leader sequence from pre-tRNA to produce the mature 5'-terminus. It can also cleave other RNA substrates such as 4.5S RNA. The protein component plays an auxiliary but essential role in vivo by binding to the 5'-leader sequence and broadening the substrate specificity of the ribozyme. The sequence is that of Ribonuclease P protein component from Helicobacter pylori (strain P12).